A 301-amino-acid chain; its full sequence is Putative MgpC-like protein MPN_093 (301 aa).

The protein belongs to the MgpC family.

The chain is Putative MgpC-like protein MPN_093 from Mycoplasma pneumoniae (strain ATCC 29342 / M129 / Subtype 1) (Mycoplasmoides pneumoniae).